The following is a 1343-amino-acid chain: DNA-directed RNA polymerase subunit beta (1343 aa).

It belongs to the RNA polymerase beta chain family. As to quaternary structure, the RNAP catalytic core consists of 2 alpha, 1 beta, 1 beta' and 1 omega subunit. When a sigma factor is associated with the core the holoenzyme is formed, which can initiate transcription.

It carries out the reaction RNA(n) + a ribonucleoside 5'-triphosphate = RNA(n+1) + diphosphate. DNA-dependent RNA polymerase catalyzes the transcription of DNA into RNA using the four ribonucleoside triphosphates as substrates. The protein is DNA-directed RNA polymerase subunit beta of Shewanella baltica (strain OS223).